A 298-amino-acid chain; its full sequence is Type II methyltransferase M.MjaIV (298 aa).

The catalysed reaction is a 2'-deoxyadenosine in DNA + S-adenosyl-L-methionine = an N(6)-methyl-2'-deoxyadenosine in DNA + S-adenosyl-L-homocysteine + H(+). In terms of biological role, a methylase that recognizes the double-stranded sequence 5'-GTNNAC-3', methylates A-5 on both strands, and protects the DNA from cleavage by the MjaIV endonuclease. The protein is Type II methyltransferase M.MjaIV (mjaIVMP) of Methanocaldococcus jannaschii (strain ATCC 43067 / DSM 2661 / JAL-1 / JCM 10045 / NBRC 100440) (Methanococcus jannaschii).